A 214-amino-acid polypeptide reads, in one-letter code: MRISLILVFIGPPGSGKGTQASLLSEKFSIISVGKVLRTVMESNTAEADVVKKFIKSGKLVPSNITNKIVVNALKNIDQCKSIILDGYPRDIFQADFLQENLQMDFKVLFFDIDDAVVLRRLSGRISCTDCGTIYNKLYCMPKINGVCDICNSSSFQNRVDDDESIIKLRLESYKKETLPLLEFYKAQDKLTLIDANQSTENILKKIKKISGIY.

14-19 contacts ATP; it reads GSGKGT. Positions 32 to 61 are NMP; it reads SVGKVLRTVMESNTAEADVVKKFIKSGKLV. Residues R38, 59-61, 87-90, and Q94 each bind AMP; these read KLV and GYPR. The interval 124 to 162 is LID; the sequence is GRISCTDCGTIYNKLYCMPKINGVCDICNSSSFQNRVDD. Residue R125 coordinates ATP. Zn(2+) contacts are provided by C128 and C131. 134–135 lines the ATP pocket; the sequence is IY. Residues C148 and C151 each coordinate Zn(2+). AMP contacts are provided by R159 and R170. An ATP-binding site is contributed by Q198.

It belongs to the adenylate kinase family. In terms of assembly, monomer.

It is found in the cytoplasm. The catalysed reaction is AMP + ATP = 2 ADP. It functions in the pathway purine metabolism; AMP biosynthesis via salvage pathway; AMP from ADP: step 1/1. Functionally, catalyzes the reversible transfer of the terminal phosphate group between ATP and AMP. Plays an important role in cellular energy homeostasis and in adenine nucleotide metabolism. In Orientia tsutsugamushi (strain Ikeda) (Rickettsia tsutsugamushi), this protein is Adenylate kinase.